We begin with the raw amino-acid sequence, 207 residues long: dITP/XTP pyrophosphatase (207 aa).

A substrate-binding site is contributed by 10–15 (TRNAGK). Mg(2+)-binding residues include Glu43 and Asp72. The Proton acceptor role is filled by Asp72. Residues Ser73, 161–164 (FGYD), Lys184, and 189–190 (HR) each bind substrate.

This sequence belongs to the HAM1 NTPase family. As to quaternary structure, homodimer. Mg(2+) is required as a cofactor.

The catalysed reaction is XTP + H2O = XMP + diphosphate + H(+). It catalyses the reaction dITP + H2O = dIMP + diphosphate + H(+). It carries out the reaction ITP + H2O = IMP + diphosphate + H(+). Pyrophosphatase that catalyzes the hydrolysis of nucleoside triphosphates to their monophosphate derivatives, with a high preference for the non-canonical purine nucleotides XTP (xanthosine triphosphate), dITP (deoxyinosine triphosphate) and ITP. Seems to function as a house-cleaning enzyme that removes non-canonical purine nucleotides from the nucleotide pool, thus preventing their incorporation into DNA/RNA and avoiding chromosomal lesions. This chain is dITP/XTP pyrophosphatase, found in Nitratidesulfovibrio vulgaris (strain ATCC 29579 / DSM 644 / CCUG 34227 / NCIMB 8303 / VKM B-1760 / Hildenborough) (Desulfovibrio vulgaris).